A 341-amino-acid polypeptide reads, in one-letter code: MRRAVLEILEERIIHNVKEIHRFSGKRIIAVVKANAYGIGVREVSRILEGLEEVDAFAVACTQEGVELRECGIKKKILILGGILEEDVKLLEEYDLTPVISDPEHLKVLKDRNIKFHVKYDTGMGRLGFTNEIIKDPRVEGVMSHFSSPADRNFSKLQIKRFEEILKNYEKVKYIHLESSAGLIYRVPFTTHVRVGLAIYGEKPLKDYPLEVKPALRLRARLISVKELPENYPVSYGRTYITKRKTKLGVVAFGYADGLMKTLSNRSFLIFEGRKVPIIGNITMDMTMVDLSGTEARTGDWVYIVNEERSFTPLARDAGTIPYEIMCNLSRRVERLVIKKR.

K33 (proton acceptor; specific for D-alanine) is an active-site residue. K33 carries the post-translational modification N6-(pyridoxal phosphate)lysine. Substrate is bound at residue R126. The Proton acceptor; specific for L-alanine role is filled by Y236. M284 provides a ligand contact to substrate.

This sequence belongs to the alanine racemase family. It depends on pyridoxal 5'-phosphate as a cofactor.

It carries out the reaction L-alanine = D-alanine. Its pathway is amino-acid biosynthesis; D-alanine biosynthesis; D-alanine from L-alanine: step 1/1. Functionally, catalyzes the interconversion of L-alanine and D-alanine. The sequence is that of Alanine racemase (alr) from Aquifex pyrophilus.